Reading from the N-terminus, the 443-residue chain is Glutamyl-tRNA reductase (443 aa).

Residues 49 to 52 (TCNR), serine 109, 114 to 116 (ETQ), and glutamine 120 contribute to the substrate site. Cysteine 50 acts as the Nucleophile in catalysis. 189–194 (GAGEMS) contributes to the NADP(+) binding site.

Belongs to the glutamyl-tRNA reductase family. As to quaternary structure, homodimer.

The catalysed reaction is (S)-4-amino-5-oxopentanoate + tRNA(Glu) + NADP(+) = L-glutamyl-tRNA(Glu) + NADPH + H(+). The protein operates within porphyrin-containing compound metabolism; protoporphyrin-IX biosynthesis; 5-aminolevulinate from L-glutamyl-tRNA(Glu): step 1/2. Catalyzes the NADPH-dependent reduction of glutamyl-tRNA(Glu) to glutamate 1-semialdehyde (GSA). The protein is Glutamyl-tRNA reductase of Desulfitobacterium hafniense (strain DSM 10664 / DCB-2).